Reading from the N-terminus, the 649-residue chain is 1-deoxy-D-xylulose-5-phosphate synthase (649 aa).

Thiamine diphosphate-binding positions include histidine 73 and 114-116 (SHA). Aspartate 145 provides a ligand contact to Mg(2+). Thiamine diphosphate is bound by residues 146 to 147 (GA), asparagine 175, tyrosine 286, and glutamate 367. Asparagine 175 lines the Mg(2+) pocket.

The protein belongs to the transketolase family. DXPS subfamily. As to quaternary structure, homodimer. Requires Mg(2+) as cofactor. The cofactor is thiamine diphosphate.

It carries out the reaction D-glyceraldehyde 3-phosphate + pyruvate + H(+) = 1-deoxy-D-xylulose 5-phosphate + CO2. It participates in metabolic intermediate biosynthesis; 1-deoxy-D-xylulose 5-phosphate biosynthesis; 1-deoxy-D-xylulose 5-phosphate from D-glyceraldehyde 3-phosphate and pyruvate: step 1/1. Its function is as follows. Catalyzes the acyloin condensation reaction between C atoms 2 and 3 of pyruvate and glyceraldehyde 3-phosphate to yield 1-deoxy-D-xylulose-5-phosphate (DXP). This is 1-deoxy-D-xylulose-5-phosphate synthase from Rhodococcus jostii (strain RHA1).